We begin with the raw amino-acid sequence, 510 residues long: Propionyl-CoA carboxylase beta chain (510 aa).

The CoA carboxyltransferase N-terminal domain occupies 1–257 (MKDILEQLED…NNREKPPVRP (257 aa)). A carboxyltransferase region spans residues 1-504 (MKDILEQLED…NKSVQMPWKK (504 aa)). A CoA carboxyltransferase C-terminal domain is found at 261-504 (DPDRIEPSLD…NKSVQMPWKK (244 aa)). The tract at residues 292–325 (DEGDFYEIQEEFAKNIITGFIRLEGRTVGVVANQ) is acyl-CoA binding.

Belongs to the AccD/PCCB family. In terms of assembly, the holoenzyme is a dodecamer composed of 6 PccA/alpha subunits and 6 PccB/beta subunits.

It catalyses the reaction propanoyl-CoA + hydrogencarbonate + ATP = (S)-methylmalonyl-CoA + ADP + phosphate + H(+). It participates in metabolic intermediate metabolism; propanoyl-CoA degradation; succinyl-CoA from propanoyl-CoA: step 1/3. Its function is as follows. This is one of the 2 subunits of the biotin-dependent propionyl-CoA carboxylase (PCC), the enzyme catalyzing the carboxylation of propionyl-CoA/propanoyl-CoA to D-methylmalonyl-CoA/(S)-methylmalonyl-CoA. Within the holoenzyme, the alpha subunit catalyzes the ATP-dependent carboxylation of the biotin carried by the biotin carboxyl carrier (BCC) domain, while the beta subunit then tranfers the carboxyl group from carboxylated biotin to propionyl-CoA. In Roseobacter denitrificans (strain ATCC 33942 / OCh 114) (Erythrobacter sp. (strain OCh 114)), this protein is Propionyl-CoA carboxylase beta chain.